The primary structure comprises 90 residues: Small ribosomal subunit protein uS15 (90 aa).

It belongs to the universal ribosomal protein uS15 family. In terms of assembly, part of the 30S ribosomal subunit. Forms a bridge to the 50S subunit in the 70S ribosome, contacting the 23S rRNA.

One of the primary rRNA binding proteins, it binds directly to 16S rRNA where it helps nucleate assembly of the platform of the 30S subunit by binding and bridging several RNA helices of the 16S rRNA. In terms of biological role, forms an intersubunit bridge (bridge B4) with the 23S rRNA of the 50S subunit in the ribosome. The polypeptide is Small ribosomal subunit protein uS15 (Blochmanniella floridana).